The chain runs to 364 residues: ATP synthase gamma chain, chloroplastic (364 aa).

The N-terminal 41 residues, M1–C41, are a transit peptide targeting the chloroplast. The disordered stretch occupies residues P17 to T36. The segment covering A25–T36 has biased composition (low complexity). The active site involves C130. The cysteines at positions 240 and 246 are disulfide-linked.

The protein belongs to the ATPase gamma chain family. As to quaternary structure, F-type ATPases have 2 components, CF(1) - the catalytic core - and CF(0) - the membrane proton channel. CF(1) has five subunits: alpha(3), beta(3), gamma(1), delta(1), epsilon(1). CF(0) has four main subunits: a, b, b' and c. Post-translationally, disulfide bond; Cys-240 and Cys-246 are known to form a disulfide bridge in the dark which gives rise to an inactive enzyme. Activation can be brought about by a ferredoxin-dependent reduction of the disulfide bond in the light.

It is found in the plastid. Its subcellular location is the chloroplast thylakoid membrane. In terms of biological role, produces ATP from ADP in the presence of a proton gradient across the membrane. The gamma chain is believed to be important in regulating ATPase activity and the flow of protons through the CF(0) complex. This is ATP synthase gamma chain, chloroplastic (ATPC) from Spinacia oleracea (Spinach).